Reading from the N-terminus, the 91-residue chain is Sec-independent protein translocase protein TatA (91 aa).

A helical transmembrane segment spans residues 1–21 (MGIFDWKHWIVILIVVVLVFG). The interval 42-91 (AMHDDDKPAEQPAPQPQQAQPAPQGSPLNQPHTIDAQAHKVDEPIRKDQV) is disordered. Over residues 51 to 64 (EQPAPQPQQAQPAP) the composition is skewed to low complexity. Residues 78 to 91 (QAHKVDEPIRKDQV) show a composition bias toward basic and acidic residues.

Belongs to the TatA/E family. In terms of assembly, the Tat system comprises two distinct complexes: a TatABC complex, containing multiple copies of TatA, TatB and TatC subunits, and a separate TatA complex, containing only TatA subunits. Substrates initially bind to the TatABC complex, which probably triggers association of the separate TatA complex to form the active translocon.

The protein resides in the cell inner membrane. In terms of biological role, part of the twin-arginine translocation (Tat) system that transports large folded proteins containing a characteristic twin-arginine motif in their signal peptide across membranes. TatA could form the protein-conducting channel of the Tat system. The chain is Sec-independent protein translocase protein TatA from Pseudomonas syringae pv. tomato (strain ATCC BAA-871 / DC3000).